A 218-amino-acid chain; its full sequence is Small ribosomal subunit protein uS3 (218 aa).

Residues Ile-38–Lys-106 form the KH type-2 domain.

It belongs to the universal ribosomal protein uS3 family. As to quaternary structure, part of the 30S ribosomal subunit. Forms a tight complex with proteins S10 and S14.

Binds the lower part of the 30S subunit head. Binds mRNA in the 70S ribosome, positioning it for translation. The sequence is that of Small ribosomal subunit protein uS3 from Listeria monocytogenes serotype 4b (strain F2365).